The primary structure comprises 420 residues: 3-phosphoshikimate 1-carboxyvinyltransferase (420 aa).

The tract at residues 1–24 (MTRTAKLTIIPPGRPLSGRAMPPG) is disordered. The 3-phosphoshikimate site is built by K26, S27, and R31. K26 is a phosphoenolpyruvate binding site. Positions 97 and 125 each coordinate phosphoenolpyruvate. 3-phosphoshikimate is bound by residues S170, S171, Q172, D297, N320, and K324. Residue Q172 participates in phosphoenolpyruvate binding. D297 (proton acceptor) is an active-site residue. Residues R328, R375, and K400 each contribute to the phosphoenolpyruvate site.

The protein belongs to the EPSP synthase family. Monomer.

It localises to the cytoplasm. It carries out the reaction 3-phosphoshikimate + phosphoenolpyruvate = 5-O-(1-carboxyvinyl)-3-phosphoshikimate + phosphate. It participates in metabolic intermediate biosynthesis; chorismate biosynthesis; chorismate from D-erythrose 4-phosphate and phosphoenolpyruvate: step 6/7. Functionally, catalyzes the transfer of the enolpyruvyl moiety of phosphoenolpyruvate (PEP) to the 5-hydroxyl of shikimate-3-phosphate (S3P) to produce enolpyruvyl shikimate-3-phosphate and inorganic phosphate. The polypeptide is 3-phosphoshikimate 1-carboxyvinyltransferase (Rhizobium etli (strain CIAT 652)).